Here is a 487-residue protein sequence, read N- to C-terminus: N-succinylglutamate 5-semialdehyde dehydrogenase (487 aa).

221–226 (GSSRTG) serves as a coordination point for NAD(+). Residues Glu244 and Cys278 contribute to the active site.

Belongs to the aldehyde dehydrogenase family. AstD subfamily.

The enzyme catalyses N-succinyl-L-glutamate 5-semialdehyde + NAD(+) + H2O = N-succinyl-L-glutamate + NADH + 2 H(+). It functions in the pathway amino-acid degradation; L-arginine degradation via AST pathway; L-glutamate and succinate from L-arginine: step 4/5. Its function is as follows. Catalyzes the NAD-dependent reduction of succinylglutamate semialdehyde into succinylglutamate. This Pseudomonas putida (strain W619) protein is N-succinylglutamate 5-semialdehyde dehydrogenase.